Reading from the N-terminus, the 372-residue chain is Glutamate 5-kinase (372 aa).

Lysine 14 is an ATP binding site. Residues serine 55, aspartate 142, and asparagine 154 each coordinate substrate. ATP contacts are provided by residues 174–175 (SD) and 216–222 (TGGMETK). Residues 279 to 357 (QGSIIVDLGA…WEIADVLGHK (79 aa)) enclose the PUA domain.

This sequence belongs to the glutamate 5-kinase family.

It localises to the cytoplasm. The catalysed reaction is L-glutamate + ATP = L-glutamyl 5-phosphate + ADP. It participates in amino-acid biosynthesis; L-proline biosynthesis; L-glutamate 5-semialdehyde from L-glutamate: step 1/2. In terms of biological role, catalyzes the transfer of a phosphate group to glutamate to form L-glutamate 5-phosphate. The chain is Glutamate 5-kinase from Carboxydothermus hydrogenoformans (strain ATCC BAA-161 / DSM 6008 / Z-2901).